The primary structure comprises 383 residues: Hippurate hydrolase (383 aa).

Belongs to the peptidase M20 family.

The enzyme catalyses N-benzoylglycine + H2O = benzoate + glycine. Its function is as follows. Cleaves hippuric acid into benzoic acid and glycine. The polypeptide is Hippurate hydrolase (Campylobacter jejuni subsp. jejuni serotype O:2 (strain ATCC 700819 / NCTC 11168)).